A 254-amino-acid chain; its full sequence is Keratin-associated protein 24-1 (254 aa).

Tandem repeats lie at residues 193-202 (YISNSCQPQS), 203-212 (YLVRNYHYSS), 213-222 (YRPTSCRPLS), 223-232 (YLSRSFRSLS), 233-242 (YIPSTFPPLR), and 243-252 (YLCSGSRPLK). Positions 193–252 (YISNSCQPQSYLVRNYHYSSYRPTSCRPLSYLSRSFRSLSYIPSTFPPLRYLCSGSRPLK) are 6 X 10 AA repeats of Y-[ILR]-[SVPC]-[NRTS]-[SNTG]-X-[QHRP]-[PSY]-[QSL]-[SRK].

Belongs to the PMG family. Interacts with hair keratins. As to expression, specific expression in the middle/upper hair cuticle.

Functionally, in the hair cortex, hair keratin intermediate filaments are embedded in an interfilamentous matrix, consisting of hair keratin-associated proteins (KRTAP), which are essential for the formation of a rigid and resistant hair shaft through their extensive disulfide bond cross-linking with abundant cysteine residues of hair keratins. The matrix proteins include the high-sulfur and high-glycine-tyrosine keratins. The chain is Keratin-associated protein 24-1 (KRTAP24-1) from Homo sapiens (Human).